Reading from the N-terminus, the 208-residue chain is Uracil phosphoribosyltransferase (208 aa).

5-phospho-alpha-D-ribose 1-diphosphate-binding positions include Arg-78, Arg-103, and 130 to 138; that span reads DPMFATGGT. Uracil is bound by residues Ile-193 and 198 to 200; that span reads GDA. Residue Asp-199 coordinates 5-phospho-alpha-D-ribose 1-diphosphate.

This sequence belongs to the UPRTase family. Requires Mg(2+) as cofactor.

The enzyme catalyses UMP + diphosphate = 5-phospho-alpha-D-ribose 1-diphosphate + uracil. It participates in pyrimidine metabolism; UMP biosynthesis via salvage pathway; UMP from uracil: step 1/1. Allosterically activated by GTP. Catalyzes the conversion of uracil and 5-phospho-alpha-D-ribose 1-diphosphate (PRPP) to UMP and diphosphate. The chain is Uracil phosphoribosyltransferase from Campylobacter jejuni subsp. jejuni serotype O:6 (strain 81116 / NCTC 11828).